The chain runs to 273 residues: MSASGENGTAKDYISHHLNNLQLDLRTFQLVEPHSGTPTFWTLNIDSLFFSVVLGALFLFIFKKVANTATSGVPGKLQTAVELIMGFVDSSVRDMYHGKSKVIAPLALTVFVWVFLMNMMDLLPIDLLPFIGEHVFGLPALRVVPTADVSITLSMALGVFILILFYSIKMKGVGGFVKELTMQPFNHPLFIPINLILEGVSLLSKPVSLGLRLFGNMYAGELIFILIAGLLPWWSQWLLNVPWAIFHILIITLQAFIFMVLTIVYLSMASEEH.

5 helical membrane-spanning segments follow: residues threonine 42–phenylalanine 62, valine 102–leucine 122, aspartate 148–isoleucine 168, leucine 213–tryptophan 233, and alanine 244–valine 264.

The protein belongs to the ATPase A chain family. F-type ATPases have 2 components, CF(1) - the catalytic core - and CF(0) - the membrane proton channel. CF(1) has five subunits: alpha(3), beta(3), gamma(1), delta(1), epsilon(1). CF(0) has three main subunits: a(1), b(2) and c(9-12). The alpha and beta chains form an alternating ring which encloses part of the gamma chain. CF(1) is attached to CF(0) by a central stalk formed by the gamma and epsilon chains, while a peripheral stalk is formed by the delta and b chains.

It localises to the cell inner membrane. Its function is as follows. Key component of the proton channel; it plays a direct role in the translocation of protons across the membrane. The polypeptide is ATP synthase subunit a (Serratia proteamaculans (strain 568)).